The sequence spans 160 residues: CXXC motif containing zinc binding protein (160 aa).

Zn(2+)-binding residues include cysteine 33, cysteine 36, cysteine 67, and cysteine 70. Serine 75 carries the post-translational modification Phosphoserine.

The protein belongs to the UPF0587 family. As to quaternary structure, monomer.

The chain is CXXC motif containing zinc binding protein (Czib) from Mus musculus (Mouse).